Reading from the N-terminus, the 338-residue chain is Phenylalanine--tRNA ligase alpha subunit (338 aa).

Glu253 serves as a coordination point for Mg(2+).

The protein belongs to the class-II aminoacyl-tRNA synthetase family. Phe-tRNA synthetase alpha subunit type 1 subfamily. In terms of assembly, tetramer of two alpha and two beta subunits. It depends on Mg(2+) as a cofactor.

The protein localises to the cytoplasm. The enzyme catalyses tRNA(Phe) + L-phenylalanine + ATP = L-phenylalanyl-tRNA(Phe) + AMP + diphosphate + H(+). This chain is Phenylalanine--tRNA ligase alpha subunit, found in Citrifermentans bemidjiense (strain ATCC BAA-1014 / DSM 16622 / JCM 12645 / Bem) (Geobacter bemidjiensis).